The primary structure comprises 591 residues: Asparagine synthetase [glutamine-hydrolyzing] 2 (591 aa).

The active-site For GATase activity is Cys-2. The region spanning 2 to 185 (CGILAVLGVA…PGHLYSSKTG (184 aa)) is the Glutamine amidotransferase type-2 domain. L-glutamine-binding positions include 50–54 (RLAIV), 75–77 (NGE), and Asp-98. The region spanning 193 to 516 (PPWFSESIPS…PKNAARLTVP (324 aa)) is the Asparagine synthetase domain. ATP-binding positions include Leu-231, Ile-267, and 341-342 (SG).

As to expression, expressed in companion cells of leaf sheath vascular bundles, and phloem-parenchyma cells, nucellar projections and nucellar epidermis of dorsal vascular bundles of grains.

It carries out the reaction L-aspartate + L-glutamine + ATP + H2O = L-asparagine + L-glutamate + AMP + diphosphate + H(+). Its pathway is amino-acid biosynthesis; L-asparagine biosynthesis; L-asparagine from L-aspartate (L-Gln route): step 1/1. Essential for nitrogen assimilation, distribution and remobilization within the plant via the phloem. The sequence is that of Asparagine synthetase [glutamine-hydrolyzing] 2 from Oryza sativa subsp. japonica (Rice).